The sequence spans 170 residues: Metalloproteinase inhibitor 4 (170 aa).

Residues 1–105 (ISSEKVVPAS…SLNHHYHLNC (105 aa)) enclose the NTR domain. Involved in metalloproteinase-binding stretches follow at residues 6–9 (VVPA) and 48–49 (SS). Cystine bridges form between cysteine 107–cysteine 154, cysteine 112–cysteine 117, and cysteine 125–cysteine 146.

This sequence belongs to the protease inhibitor I35 (TIMP) family.

The protein resides in the secreted. Functionally, complexes with metalloproteinases (such as collagenases) and irreversibly inactivates them by binding to their catalytic zinc cofactor. The sequence is that of Metalloproteinase inhibitor 4 (TIMP4) from Oryctolagus cuniculus (Rabbit).